A 371-amino-acid chain; its full sequence is Ribosomal RNA small subunit methyltransferase H (371 aa).

S-adenosyl-L-methionine-binding positions include 43–45 (GGH), Asp-62, Leu-96, Asp-110, and Gln-117. A disordered region spans residues 315–371 (AAERLDPTQQQRQRTDRERYRRQVRAMHQPGTGSAVRRPVSGDDGTGTDEEGEGHDD). Over residues 360-371 (TGTDEEGEGHDD) the composition is skewed to acidic residues.

The protein belongs to the methyltransferase superfamily. RsmH family.

Its subcellular location is the cytoplasm. It carries out the reaction cytidine(1402) in 16S rRNA + S-adenosyl-L-methionine = N(4)-methylcytidine(1402) in 16S rRNA + S-adenosyl-L-homocysteine + H(+). Its function is as follows. Specifically methylates the N4 position of cytidine in position 1402 (C1402) of 16S rRNA. This Salinispora tropica (strain ATCC BAA-916 / DSM 44818 / JCM 13857 / NBRC 105044 / CNB-440) protein is Ribosomal RNA small subunit methyltransferase H.